A 311-amino-acid polypeptide reads, in one-letter code: Dihydroorotate dehydrogenase A (fumarate) (311 aa).

FMN contacts are provided by residues serine 19 and 43-44 (KS). Residues lysine 43, 67–71 (NSMGL), and asparagine 127 contribute to the substrate site. Asparagine 127 contacts FMN. Cysteine 130 functions as the Nucleophile in the catalytic mechanism. Residues lysine 164 and valine 192 each contribute to the FMN site. 193-194 (NS) contacts substrate. FMN is bound by residues glycine 221, 249–250 (GG), and 271–272 (GT).

It belongs to the dihydroorotate dehydrogenase family. Type 1 subfamily. As to quaternary structure, homodimer. The cofactor is FMN.

It is found in the cytoplasm. It catalyses the reaction (S)-dihydroorotate + fumarate = orotate + succinate. The protein operates within pyrimidine metabolism; UMP biosynthesis via de novo pathway. In terms of biological role, catalyzes the conversion of dihydroorotate to orotate with fumarate as the electron acceptor. The sequence is that of Dihydroorotate dehydrogenase A (fumarate) (pyrDA) from Lactococcus lactis subsp. cremoris (Streptococcus cremoris).